The following is a 319-amino-acid chain: Acetyl-coenzyme A carboxylase carboxyl transferase subunit alpha (319 aa).

The CoA carboxyltransferase C-terminal domain occupies 32–293; sequence NVDTEVRALE…KAVLLNELEA (262 aa).

It belongs to the AccA family. Acetyl-CoA carboxylase is a heterohexamer composed of biotin carboxyl carrier protein (AccB), biotin carboxylase (AccC) and two subunits each of ACCase subunit alpha (AccA) and ACCase subunit beta (AccD).

It localises to the cytoplasm. It catalyses the reaction N(6)-carboxybiotinyl-L-lysyl-[protein] + acetyl-CoA = N(6)-biotinyl-L-lysyl-[protein] + malonyl-CoA. It participates in lipid metabolism; malonyl-CoA biosynthesis; malonyl-CoA from acetyl-CoA: step 1/1. Component of the acetyl coenzyme A carboxylase (ACC) complex. First, biotin carboxylase catalyzes the carboxylation of biotin on its carrier protein (BCCP) and then the CO(2) group is transferred by the carboxyltransferase to acetyl-CoA to form malonyl-CoA. This is Acetyl-coenzyme A carboxylase carboxyl transferase subunit alpha from Xylella fastidiosa (strain M12).